A 199-amino-acid polypeptide reads, in one-letter code: Nitrile hydratase subunit alpha (199 aa).

Residues C102, C105, S106, and C107 each coordinate Fe(3+). At C105 the chain carries Cysteine sulfinic acid (-SO2H). C107 is subject to Cysteine sulfenic acid (-SOH).

Belongs to the nitrile hydratase subunit alpha family. Heterodimer of an alpha and a beta chain. Fe(3+) is required as a cofactor. Oxidation on Cys-105 is essential for the activity. Post-translationally, oxidation on Cys-107 stabilizes the Fe-NO ligand coordinated in the inactive form.

It catalyses the reaction an aliphatic primary amide = an aliphatic nitrile + H2O. Inactivated by oxidation of Cys-107 to a sulfenic acid. Functionally, NHase catalyzes the hydration of various nitrile compounds to the corresponding amides. Industrial production of acrylamide is now being developed using some of the enzymes of this class. The sequence is that of Nitrile hydratase subunit alpha (nthA) from Rhodococcus sp.